The chain runs to 61 residues: Large ribosomal subunit protein eL37 (61 aa).

Residues C19, C22, C34, and C37 each coordinate Zn(2+). The C4-type zinc finger occupies 19–37 (CRRCGRNSFNARKGYCAAC).

The protein belongs to the eukaryotic ribosomal protein eL37 family. Requires Zn(2+) as cofactor.

Its function is as follows. Binds to the 23S rRNA. This Sulfolobus acidocaldarius (strain ATCC 33909 / DSM 639 / JCM 8929 / NBRC 15157 / NCIMB 11770) protein is Large ribosomal subunit protein eL37.